The following is a 291-amino-acid chain: Lipoyl synthase (291 aa).

Cys-35, Cys-40, Cys-46, Cys-61, Cys-65, Cys-68, and Ser-273 together coordinate [4Fe-4S] cluster. One can recognise a Radical SAM core domain in the interval 47–262 (FGKRQATFLI…KEKALAMGFE (216 aa)).

This sequence belongs to the radical SAM superfamily. Lipoyl synthase family. It depends on [4Fe-4S] cluster as a cofactor.

Its subcellular location is the cytoplasm. The catalysed reaction is [[Fe-S] cluster scaffold protein carrying a second [4Fe-4S](2+) cluster] + N(6)-octanoyl-L-lysyl-[protein] + 2 oxidized [2Fe-2S]-[ferredoxin] + 2 S-adenosyl-L-methionine + 4 H(+) = [[Fe-S] cluster scaffold protein] + N(6)-[(R)-dihydrolipoyl]-L-lysyl-[protein] + 4 Fe(3+) + 2 hydrogen sulfide + 2 5'-deoxyadenosine + 2 L-methionine + 2 reduced [2Fe-2S]-[ferredoxin]. The protein operates within protein modification; protein lipoylation via endogenous pathway; protein N(6)-(lipoyl)lysine from octanoyl-[acyl-carrier-protein]: step 2/2. Catalyzes the radical-mediated insertion of two sulfur atoms into the C-6 and C-8 positions of the octanoyl moiety bound to the lipoyl domains of lipoate-dependent enzymes, thereby converting the octanoylated domains into lipoylated derivatives. The chain is Lipoyl synthase from Geobacter sp. (strain M21).